A 114-amino-acid polypeptide reads, in one-letter code: Putative movement protein (114 aa).

The helical transmembrane segment at 27 to 47 (LIGIILLVTVCLTVLWVCIML) threads the bilayer. The segment at 79–114 (RTPFEATGPERERNWEARRQSTTVNPASQPNTGSVF) is disordered. The segment covering 86-97 (GPERERNWEARR) has biased composition (basic and acidic residues). The span at 98-114 (QSTTVNPASQPNTGSVF) shows a compositional bias: polar residues.

This sequence belongs to the nanovirus movement protein family.

It is found in the host cell membrane. In terms of biological role, may transport viral genome to neighboring plant cells directly through plasmosdesmata, without any budding. The movement protein allows efficient cell to cell propagation, by bypassing the host cell wall barrier. This chain is Putative movement protein (DNA-M), found in Faba bean necrotic yellows virus (isolate Egyptian EV1-93) (FBNYV).